Reading from the N-terminus, the 295-residue chain is Beta-lactamase-like protein 2 homolog (295 aa).

7 residues coordinate Zn(2+): His-79, His-81, Asp-83, His-84, His-141, Asp-160, and His-195.

This sequence belongs to the metallo-beta-lactamase superfamily. Glyoxalase II family.

This Caenorhabditis elegans protein is Beta-lactamase-like protein 2 homolog.